The primary structure comprises 329 residues: RNA polymerase sigma factor SigB (329 aa).

The span at 1 to 12 (MTSPSDVEASTE) shows a compositional bias: polar residues. A disordered region spans residues 1–27 (MTSPSDVEASTETVDRGSRRNQTNDNP). The Polymerase core binding motif lies at 120-133 (DLIQEGNLGLIRAM). Residues 290-309 (LDQIGRQFGLSRERVRQIER) constitute a DNA-binding region (H-T-H motif).

It belongs to the sigma-70 factor family.

Its function is as follows. Sigma factors are initiation factors that promote the attachment of RNA polymerase to specific initiation sites and are then released. This is RNA polymerase sigma factor SigB (sigB) from Corynebacterium diphtheriae (strain ATCC 700971 / NCTC 13129 / Biotype gravis).